The following is a 354-amino-acid chain: Uroporphyrinogen decarboxylase (354 aa).

Substrate contacts are provided by residues 27 to 31 (RQAGR), Phe46, Asp77, Tyr154, Ser209, and His327.

Belongs to the uroporphyrinogen decarboxylase family. Homodimer.

The protein localises to the cytoplasm. It catalyses the reaction uroporphyrinogen III + 4 H(+) = coproporphyrinogen III + 4 CO2. It participates in porphyrin-containing compound metabolism; protoporphyrin-IX biosynthesis; coproporphyrinogen-III from 5-aminolevulinate: step 4/4. In terms of biological role, catalyzes the decarboxylation of four acetate groups of uroporphyrinogen-III to yield coproporphyrinogen-III. The polypeptide is Uroporphyrinogen decarboxylase (Pseudomonas syringae pv. tomato (strain ATCC BAA-871 / DC3000)).